A 325-amino-acid polypeptide reads, in one-letter code: uncharacterized protein (325 aa).

2 stretches are compositionally biased toward polar residues: residues 1–21 and 29–57; these read MSYQ…SSSA and EPFS…SSRA. The segment at 1-325 is disordered; sequence MSYQQRANDS…LKTGHHSERY (325 aa). Positions 86–109 are enriched in basic and acidic residues; that stretch reads ESRKKEQSDVRGGDTSYSRRHDDS. Composition is skewed to polar residues over residues 114–167 and 174–193; these read NKYS…TTQG and YSQS…TPSD. Low complexity-rich tracts occupy residues 200-210 and 252-278; these read YDYSSSGSHTH and ATDT…QRNA. The segment covering 282-325 has biased composition (basic and acidic residues); that stretch reads EDEHVSMGDKMKGNMEKMAGKLTRDPELVQKGEDLKTGHHSERY.

This is an uncharacterized protein from Schizosaccharomyces pombe (strain 972 / ATCC 24843) (Fission yeast).